Consider the following 300-residue polypeptide: Ribosomal protein L11 methyltransferase (300 aa).

S-adenosyl-L-methionine is bound by residues T148, G171, D193, and N235.

This sequence belongs to the methyltransferase superfamily. PrmA family.

The protein resides in the cytoplasm. The enzyme catalyses L-lysyl-[protein] + 3 S-adenosyl-L-methionine = N(6),N(6),N(6)-trimethyl-L-lysyl-[protein] + 3 S-adenosyl-L-homocysteine + 3 H(+). Its function is as follows. Methylates ribosomal protein L11. The protein is Ribosomal protein L11 methyltransferase of Desulfotalea psychrophila (strain LSv54 / DSM 12343).